A 314-amino-acid chain; its full sequence is Dihydroorotate dehydrogenase B (NAD(+)), catalytic subunit (314 aa).

Substrate is bound by residues lysine 55, 79-83 (NAMGL), and asparagine 136. 55–56 (KS) contacts FMN. Asparagine 136 contributes to the FMN binding site. Cysteine 139 (nucleophile) is an active-site residue. FMN-binding residues include lysine 174 and isoleucine 200. 201–202 (NT) serves as a coordination point for substrate. Residues glycine 226, 252–253 (GG), and 274–275 (GS) each bind FMN.

This sequence belongs to the dihydroorotate dehydrogenase family. Type 1 subfamily. As to quaternary structure, heterotetramer of 2 PyrK and 2 PyrD type B subunits. FMN serves as cofactor.

The protein resides in the cytoplasm. The enzyme catalyses (S)-dihydroorotate + NAD(+) = orotate + NADH + H(+). It participates in pyrimidine metabolism; UMP biosynthesis via de novo pathway; orotate from (S)-dihydroorotate (NAD(+) route): step 1/1. In terms of biological role, catalyzes the conversion of dihydroorotate to orotate with NAD(+) as electron acceptor. This is Dihydroorotate dehydrogenase B (NAD(+)), catalytic subunit (pyrD) from Methanosarcina mazei (strain ATCC BAA-159 / DSM 3647 / Goe1 / Go1 / JCM 11833 / OCM 88) (Methanosarcina frisia).